Reading from the N-terminus, the 206-residue chain is Large ribosomal subunit protein uL4 (206 aa).

The protein belongs to the universal ribosomal protein uL4 family. Part of the 50S ribosomal subunit.

Its function is as follows. One of the primary rRNA binding proteins, this protein initially binds near the 5'-end of the 23S rRNA. It is important during the early stages of 50S assembly. It makes multiple contacts with different domains of the 23S rRNA in the assembled 50S subunit and ribosome. In terms of biological role, forms part of the polypeptide exit tunnel. The protein is Large ribosomal subunit protein uL4 of Rhodopseudomonas palustris (strain BisA53).